Reading from the N-terminus, the 34-residue chain is Leader peptide SpeFL (34 aa).

The tract at residues 1–13 (MENNSRTMPHIRR) is sensor domain. The Ornithine recognition loop motif lies at 10–16 (HIRRTTH). Residue Arg-13 coordinates L-ornithine. The tract at residues 14–34 (TTHIMKFAHRNSFDFHFFNAR) is effector domain.

Belongs to the speF operon leader peptide family. In terms of assembly, binds ornithine in stalled 70S ribosomes, blocking the upper two-thirds of the exit tunnel. Contacts 23S rRNA and ribosomal proteins L4 and L22.

In terms of biological role, a small protein (arrest peptide) encoded upstream of inducible ornithine carboxylase gene (speF) that controls expression of downstream genes (speF and patE) by nascent chain-translational arrest and transcriptional attenuation. In the presence of ornithine a toeprint due to ribosomal arrest can be seen on the speFL transcript. Only L-ornithine (not other tested amino acids) has this effect. It is thought that in the presence of ornithine, ribosomal stalling on speFL prevents binding of Rho transcription termination factor to a downstream rut site allowing transcription of the operon. In the absence of ornithine, ribosomes terminate translation and are recycled, exposing the rut site allowing Rho to bind and prematurely terminate transcription. The presence of a pair of rare Arg codons could slow down translation to prevent polysome accumulation and to expose the rut site to Rho. The polypeptide is Leader peptide SpeFL (Escherichia coli (strain K12)).